The sequence spans 152 residues: Aspartate carbamoyltransferase regulatory chain (152 aa).

The Zn(2+) site is built by C108, C113, C136, and C139.

Belongs to the PyrI family. In terms of assembly, contains catalytic and regulatory chains. Zn(2+) serves as cofactor.

Functionally, involved in allosteric regulation of aspartate carbamoyltransferase. The protein is Aspartate carbamoyltransferase regulatory chain of Pyrococcus furiosus (strain ATCC 43587 / DSM 3638 / JCM 8422 / Vc1).